The primary structure comprises 279 residues: Acetylglutamate kinase (279 aa).

Residues 62–63 (GG), arginine 84, and asparagine 177 contribute to the substrate site.

The protein belongs to the acetylglutamate kinase family. ArgB subfamily.

Its subcellular location is the cytoplasm. The enzyme catalyses N-acetyl-L-glutamate + ATP = N-acetyl-L-glutamyl 5-phosphate + ADP. It functions in the pathway amino-acid biosynthesis; L-arginine biosynthesis; N(2)-acetyl-L-ornithine from L-glutamate: step 2/4. Functionally, catalyzes the ATP-dependent phosphorylation of N-acetyl-L-glutamate. The sequence is that of Acetylglutamate kinase from Pseudothermotoga lettingae (strain ATCC BAA-301 / DSM 14385 / NBRC 107922 / TMO) (Thermotoga lettingae).